We begin with the raw amino-acid sequence, 271 residues long: Membrane protein insertase YidC 1 (271 aa).

The first 20 residues, methionine 1–alanine 20, serve as a signal peptide directing secretion. Residue cysteine 21 is the site of N-palmitoyl cysteine attachment. Cysteine 21 carries the S-diacylglycerol cysteine lipid modification. A run of 4 helical transmembrane segments spans residues isoleucine 45 to isoleucine 65, tyrosine 124 to leucine 144, proline 163 to leucine 183, and valine 201 to tryptophan 221.

Belongs to the OXA1/ALB3/YidC family. Type 2 subfamily.

It is found in the cell membrane. Required for the insertion and/or proper folding and/or complex formation of integral membrane proteins into the membrane. Involved in integration of membrane proteins that insert both dependently and independently of the Sec translocase complex, as well as at least some lipoproteins. The polypeptide is Membrane protein insertase YidC 1 (Streptococcus agalactiae serotype V (strain ATCC BAA-611 / 2603 V/R)).